A 463-amino-acid polypeptide reads, in one-letter code: Matrix remodeling-associated protein 8 (463 aa).

The signal sequence occupies residues 1–19; it reads MELRAWVLLWRLVLLQSSA. Topologically, residues 20–362 are extracellular; it reads VLLSSGPSGP…PEGRAHFFQQ (343 aa). 2 consecutive Ig-like V-type domains span residues 29 to 173 and 176 to 308; these read PATS…LEVT and PRAA…LRVT. 2 disulfides stabilise this stretch: C54–C153 and C202–C288. An N-linked (GlcNAc...) asparagine glycan is attached at N135. S244 is subject to Phosphoserine. The short motif at 268–270 is the RGD element; the sequence is RGD. The tract at residues 309–341 is disordered; sequence EPAARPPPPPRDSPGNGSSHSGAPGPGARDPTL. Residues 321-335 are compositionally biased toward low complexity; it reads SPGNGSSHSGAPGPG. An N-linked (GlcNAc...) asparagine glycan is attached at N324. A helical transmembrane segment spans residues 363 to 383; that stretch reads LGYVLATLLLFILLLITVVLA. At 384–463 the chain is on the cytoplasmic side; that stretch reads TRQRRRGGYE…DKEFRKEYCK (80 aa).

In terms of assembly, homodimer in cis. Does not appear to form trans-homodimers. Interacts with ITGB3; the interaction inhibits ITGAV:ITGB3 heterodimer formation.

The protein localises to the cell membrane. Its subcellular location is the cell junction. The protein resides in the tight junction. It is found in the cytoplasm. It localises to the cell projection. The protein localises to the cilium membrane. Its subcellular location is the nucleus. Transmembrane protein which can modulate activity of various signaling pathways, probably via binding to integrin ITGAV:ITGB3. Mediates heterophilic cell-cell interactions in vitro. Inhibits osteoclastogenesis downstream of TNFSF11/RANKL and CSF1, where it may function by attenuating signaling via integrin ITGB3 and MAP kinase p38. Plays a role in cartilage formation where it promotes proliferation and maturation of growth plate chondrocytes. Stimulates formation of primary cilia in chondrocytes. Enhances expression of genes involved in the hedgehog signaling pathway in chondrocytes, including the hedgehog signaling molecule IHH; may also promote signaling via the PTHLH/PTHrP pathway. Plays a role in angiogenesis where it suppresses migration of endothelial cells and also promotes their apoptosis. Inhibits VEGF-induced activation of AKT and p38 MAP kinase in endothelial cells. Also inhibits VTN (vitronectin)-mediated integrin ITGAV:ITGB3 signaling and activation of PTK2/FAK. May play a role in the maturation and maintenance of the blood-brain barrier. This chain is Matrix remodeling-associated protein 8 (MXRA8), found in Bos taurus (Bovine).